Consider the following 418-residue polypeptide: IQ domain-containing protein C (418 aa).

The IQ domain maps to 6 to 35; the sequence is FLRKVSTLQAGFRGFLVRRQFQSLRAEYEA. 5 disordered regions span residues 101 to 142, 230 to 264, 280 to 299, 327 to 355, and 376 to 418; these read QKKT…SVSK, HHAE…KGRE, SQAG…QPFK, AETQ…AGPC, and GSLD…LQWR. Polar residues-rich tracts occupy residues 129 to 142 and 249 to 259; these read KASQ…SVSK and SVTSAGKTTAG. Residues 141–176 are a coiled coil; the sequence is SKMENADLGLSQSQQELQEQRNHLAMELLWLQQAIN. Over residues 390–404 the composition is skewed to polar residues; sequence PPSAGSSGHGNTSEL.

The polypeptide is IQ domain-containing protein C (Iqcc) (Mus musculus (Mouse)).